The following is a 271-amino-acid chain: Insulin-like growth factor-binding protein 5 (271 aa).

Residues 1 to 19 (MVLTAVLLLLAACAGSAQG) form the signal peptide. Residues 22–102 (SFVHCEPCDE…LHGRGVCLNE (81 aa)) enclose the IGFBP N-terminal domain. Disulfide bonds link Cys-26–Cys-52, Cys-29–Cys-54, Cys-37–Cys-55, Cys-44–Cys-58, Cys-66–Cys-79, and Cys-73–Cys-99. A compositionally biased stretch (basic and acidic residues) spans 109–121 (AKIERDSREHEEP). The interval 109–129 (AKIERDSREHEEPTTSEMAEE) is disordered. Residue Ser-115 is modified to Phosphoserine. The region spanning 188–262 (QGPCRRHMEA…MEYVDGDFQC (75 aa)) is the Thyroglobulin type-1 domain. Cystine bridges form between Cys-191–Cys-218, Cys-229–Cys-240, and Cys-242–Cys-262.

Interacts with IGF1; this interaction enhances the growth stimulatory effects of IGF1 on fibroblasts. Interacts with CAV1; this interaction allows trafficking of IGFBP5 from the plasma membrane to the nucleus. Interacts with NCL; this interaction is necessary for IGFBP5 localization to the nucleus.

Its subcellular location is the secreted. The protein resides in the cytoplasm. It localises to the nucleus. Multifunctional protein that plays a critical role in regulating the availability of IGFs to their receptors and thereby regulates IGF-mediated cellular processes including proliferation, differentiation, and apoptosis in a cell-type specific manner. Increases the cell proliferation of osteoblasts, intestinal smooth muscle cells and neuroblastoma cells. Enhances adhesion and survival of epithelial cells but decreases adhesion of mesenchymal cells. Once secreted, acts as a major mediator of mTORC1-dependent feedback inhibition of IGF1 signaling. Also plays a role in the induction of extracellular matrix (ECM) production and deposition independently of its nuclear translocation and binding to IGFs. Acts itself as a growth factor that can act independently of IGFs to regulate bone formation. Acts as a ligand for the ROR1 receptor which triggers formation of ROR1/HER2 heterodimer to enhance CREB oncogenic signaling. This chain is Insulin-like growth factor-binding protein 5 (IGFBP5), found in Bos taurus (Bovine).